The sequence spans 776 residues: Isoamylase (776 aa).

The first 26 residues, 1-26 (MKCPKILAALLGCAVLAGVPAMPAHA), serve as a signal peptide directing secretion. Residues Asp154, Glu255, Thr256, Asn258, and Asp285 each coordinate Ca(2+). The Nucleophile role is filled by Asp401. Cys410 and Cys422 form a disulfide bridge. Catalysis depends on Glu461, which acts as the Proton donor. Disulfide bonds link Cys546/Cys616 and Cys738/Cys766.

It belongs to the glycosyl hydrolase 13 family. In terms of assembly, monomer. Requires Ca(2+) as cofactor.

It localises to the secreted. The enzyme catalyses Hydrolysis of (1-&gt;6)-alpha-D-glucosidic branch linkages in glycogen, amylopectin and their beta-limit dextrins.. This chain is Isoamylase (iam), found in Pseudomonas amyloderamosa.